An 877-amino-acid chain; its full sequence is DNA mismatch repair protein MutS (877 aa).

630–637 (GPNMAGKS) contacts ATP.

It belongs to the DNA mismatch repair MutS family.

Functionally, this protein is involved in the repair of mismatches in DNA. It is possible that it carries out the mismatch recognition step. This protein has a weak ATPase activity. This chain is DNA mismatch repair protein MutS, found in Ruegeria pomeroyi (strain ATCC 700808 / DSM 15171 / DSS-3) (Silicibacter pomeroyi).